The primary structure comprises 915 residues: MLRTIATKIFGSRNERILRRLNKIVKKINALEPSFEALSDDELKAKTDEFRQRLANGETLEQLMPEAFATVREASRRILGMRHFDVQLVGGMVLTNRNIAEMRTGEGKTLTATLPCYLNALTGKGVHVVTVNDYLARRDAETNRPLFEFLGMSVAVNVPGLDPEVKRDAYKADITYATNSELGFDYLRDNLAHSAQERFQRPLHYALVDEVDSILIDEARTPLIISGPAADSSELYIAINKLIPSLVEQEKEDSDEFQGSGDYSLDLKNKQANLTERGLEKCENWLVEQGLMRPEDSLYSASNLGLFHHISAALRAHTLFQRDVDYVVKDGEIVIVDEHTGRTMAGRRWSDGLHQAIEAKEGVKIQGENQTVASITYQNFFRLYEKLAGMTGTADTEAFEFQQIYGLETVVIPTNRPMIRDDKTDIMFENEQYKFDAIIEDIKDCIARHQPVLVGTASIEKSELLSAALDKAGIAHNVLNAKFHAQEAEIIANAGYPGAVTIATNMAGRGTDIVLGGNWKAEVAKLESPTEEQIEAIKVAWQQRHDEVMQAGGLHIIGTERHESRRIDNQLRGRSGRQGDPGSSRFYLSLDDALMRIYLNEGKLNMMRKMFTTAGEAMESKLLAKVIASAQAKVEAHNFDGRKNLLQYDDVANDQRHAIYEQRNVLLDNDDISETIDAIREDVFNSVIDEYIPPQSLEEQWKIPELEERLRTDFTLDLPVRQWLEDDNQLHEDTLRERIIDAAKAEYQRKEELAGSESMRSFEKGIMLQTLDELWKEHLSAMDYLRQGIHLRGYAQKDPKQEYKKESFQMFTEMLDALKLSVIRTLSRVRVRTQEEIEEAERQYQAAMAAQQQARQAPLPNAPASSEPTQGSELSPEEKVARVAAERHIGRNEPCPCGSGKKYKYCHGSRAKDHA.

ATP-binding positions include Gln87, 105 to 109, and Asp512; that span reads GEGKT. Over residues 849 to 864 the composition is skewed to low complexity; it reads AAQQQARQAPLPNAPA. The interval 849 to 915 is disordered; sequence AAQQQARQAP…CHGSRAKDHA (67 aa). A compositionally biased stretch (basic and acidic residues) spans 876–891; it reads PEEKVARVAAERHIGR. Zn(2+) contacts are provided by Cys895, Cys897, Cys906, and His907.

The protein belongs to the SecA family. In terms of assembly, monomer and homodimer. Part of the essential Sec protein translocation apparatus which comprises SecA, SecYEG and auxiliary proteins SecDF-YajC and YidC. Requires Zn(2+) as cofactor.

It is found in the cell inner membrane. Its subcellular location is the cytoplasm. It carries out the reaction ATP + H2O + cellular proteinSide 1 = ADP + phosphate + cellular proteinSide 2.. Part of the Sec protein translocase complex. Interacts with the SecYEG preprotein conducting channel. Has a central role in coupling the hydrolysis of ATP to the transfer of proteins into and across the cell membrane, serving both as a receptor for the preprotein-SecB complex and as an ATP-driven molecular motor driving the stepwise translocation of polypeptide chains across the membrane. The chain is Protein translocase subunit SecA from Actinobacillus succinogenes (strain ATCC 55618 / DSM 22257 / CCUG 43843 / 130Z).